We begin with the raw amino-acid sequence, 440 residues long: Adenosylhomocysteinase (440 aa).

Residues Thr-47, Asp-123, and Glu-148 each contribute to the substrate site. Position 149-151 (149-151) interacts with NAD(+); that stretch reads TTT. 2 residues coordinate substrate: Lys-178 and Asp-182. NAD(+) contacts are provided by residues Asn-183, 228-233, Glu-251, 307-309, and Asn-354; these read GFGDVG and IGH.

It belongs to the adenosylhomocysteinase family. NAD(+) is required as a cofactor.

The catalysed reaction is S-adenosyl-L-homocysteine + H2O = L-homocysteine + adenosine. It functions in the pathway amino-acid biosynthesis; L-homocysteine biosynthesis; L-homocysteine from S-adenosyl-L-homocysteine: step 1/1. Its function is as follows. Adenosylhomocysteine is a competitive inhibitor of S-adenosyl-L-methionine-dependent methyl transferase reactions; therefore adenosylhomocysteinase may play a key role in the control of methylations via regulation of the intracellular concentration of adenosylhomocysteine. This Pneumocystis carinii protein is Adenosylhomocysteinase (SAHH).